A 292-amino-acid chain; its full sequence is Nitrogenase iron protein 1 (292 aa).

12 to 19 (GKGGIGKS) contributes to the ATP binding site. Residue C101 coordinates [4Fe-4S] cluster. Position 104 is an ADP-ribosylarginine; by dinitrogenase reductase ADP-ribosyltransferase (R104). C135 is a binding site for [4Fe-4S] cluster.

It belongs to the NifH/BchL/ChlL family. In terms of assembly, homodimer. The cofactor is [4Fe-4S] cluster. In terms of processing, the reversible ADP-ribosylation of Arg-104 inactivates the nitrogenase reductase and regulates nitrogenase activity.

The catalysed reaction is N2 + 8 reduced [2Fe-2S]-[ferredoxin] + 16 ATP + 16 H2O = H2 + 8 oxidized [2Fe-2S]-[ferredoxin] + 2 NH4(+) + 16 ADP + 16 phosphate + 6 H(+). Its function is as follows. The key enzymatic reactions in nitrogen fixation are catalyzed by the nitrogenase complex, which has 2 components: the iron protein and the molybdenum-iron protein. The polypeptide is Nitrogenase iron protein 1 (nifH1) (Paenibacillus durus (Paenibacillus azotofixans)).